We begin with the raw amino-acid sequence, 325 residues long: Biotin synthase (325 aa).

The 230-residue stretch at 51 to 280 folds into the Radical SAM core domain; that stretch reads FMGRKADLCT…NVYIRYAGGR (230 aa). [4Fe-4S] cluster contacts are provided by cysteine 69, cysteine 73, and cysteine 76. Residues serine 113, cysteine 145, cysteine 205, and arginine 275 each contribute to the [2Fe-2S] cluster site.

This sequence belongs to the radical SAM superfamily. Biotin synthase family. Homodimer. Requires [4Fe-4S] cluster as cofactor. [2Fe-2S] cluster is required as a cofactor.

The enzyme catalyses (4R,5S)-dethiobiotin + (sulfur carrier)-SH + 2 reduced [2Fe-2S]-[ferredoxin] + 2 S-adenosyl-L-methionine = (sulfur carrier)-H + biotin + 2 5'-deoxyadenosine + 2 L-methionine + 2 oxidized [2Fe-2S]-[ferredoxin]. Its pathway is cofactor biosynthesis; biotin biosynthesis; biotin from 7,8-diaminononanoate: step 2/2. Functionally, catalyzes the conversion of dethiobiotin (DTB) to biotin by the insertion of a sulfur atom into dethiobiotin via a radical-based mechanism. The polypeptide is Biotin synthase (Clostridioides difficile (strain 630) (Peptoclostridium difficile)).